The primary structure comprises 2225 residues: MDILNRKKGCLVLEDGTKLSGYSFGSERSVAGECVFSTGMVGYNESISDPSYTGQILVFSFPLIGNYGVPSFRERDPESGLAVNFESDKAHVQAIICSEYCDEYSHWAAEKSLSEWLKESNIPGLYGIDTRALITKIREKGSLKGKVIIGDFDESKLEFEDINLRNLVAEVSTKEIKEYKAAENNKKTGEKRKNKKVIVLDCGIKNNQIRCLLNRGVDLKVVPWDYDVVANESINDYDGVFISNGPGDPSLCGKAIENIRKVLALPVAKAVFGVCMGNQLLGLAAGAQTHKMAFGNRGLNQPCVDQISGRCHITSQNHGFVIDSNSLPAGSGWKTYFINANDASNEGIYHESKPWFSVQFHPEAMAGPTDTEYLFDNFVDNVCGEQQHKSPMNKSKIIDCPKGINKVLILGSGGLSIGQAGEFDYSGSQAIKALKEEGIKTILINPNIATVQTSPGLADKVYFLPVNASSVQKVIENENPDGILVTFGGQTALNCGIELYKSGILEKYNCKVLGTPIETIIATEDRGIFAEKLSEINERIAPSMACNSLEESLIEAEKIGYPVIVRAAYCLGGLGSGFADNKEQLTALVTEAMATSSQVLVEKSLKGWKEIEYEVLRDSKDNCITVCNMENFDPLGIHTGESIVVAPSQTLSDREYQMLRETAIKTVRHLGVIGECNIQYSLNPYSEEYCIIEVNARLSRSSALASKATGYPLAFISAKVALGYDLAALRNTITKKTTACFEPSLDYLVVKMPRWDLKKFTRVSNKISSSMKSVGEVMSIGRKFEEAIQKAIRMVMDGAVEGFQAGVFPTSDEELEHPTNNRILVLASAFKDGYSIDRVHQLTKIDKWFLTKLKAIIDLENHLSTYKEPSQIPSEILKFSKQQGFSDKQIARAVGTTELNVRDYRKKMGIIPCTKHIDTVAAEFPAQNNYLYMTYNGETNDVNINEKSYITLGSGSYRIGSSVEFDWCAVSCIRTLRSLGLKSIMINFNPETVSTDYDECDYLYFEELSLERVLDIYERGGPNSNHGVILSVGGQIPNNLAIPLSRCNVKVLGTHPDMIDSAENRYKFSRLLDTIGIDQPLWKELTSVSDTKDFCESVGFPCLVRPSYVLSGAAMNVVHSSQDLETFLTEAAAVSRDHPVVISKFIQEAKEIEIDAVADNGRIVLFAISEHVENAGVHSGDATIVCPAQDLDDATILKVEETARKIAEALNVSGPFNIQFIAKNNEIKVIECNLRCSRSFPFVSKTLNINFIELATKIIIKHQYDLPVVNPINYVGVKVPQFSFIRLKGADPVLGVEMASTGEVACFGNTREEAYVKGLISTGFKAPEKNVLLSIGSFKEKHEFLPSAHKLIKLGYTLFGTQGTADFYSENGVPVTQLNWDEEDLGENVIQKKMTENTIHLFINLPSKNKYRRPSSFMSRGYSLRRVAIDFQVPLITNIKCAKLFVDSLSYMKGPMPIENVDWRTSNKIIRLPGLVDVHVHLREPGATHKEDWDSGTATALAGGFTMVGAMPNTNPAIMDDASFELCKSLAASKARCDYGIFIGATFTNTTTAGKFASDAMGMKMYLEETFAPLPLKDDINVWRDHIMNWPGTTPICVHADGRNLAAILLLGWMYDKHMHVCHVSHKEEIDIIRDAKKRGMKLSCEVSPHHLTLCDKDIPRIGAGQSEVRPKLGTEEDLNALWDNIDYIDMIATDHAPHTWEEKCSAKPPPGFPGLETSLPLMLTAVHNGRITIEDLVMKMHTNPIRIFNLPEQPDTYIEVDMEQEWTIPKKPLYSRCGWTPFEGLQVRGKVVKVVLRGQIAFIDGKIIAQKGFGLNLRSKEYQVEKERLLNTTKPIYDKIPTVQSTKNQTTNITSPSLISDSPNKAINKIKSTSTSTTPNTQEQSTQHLPLVGSNLASAVLNKKEDTLQTAFNISDNSLAGKHIFSVKQFNRKQLHALFGIAHEMRILVKRSGGSDLLKGKVLATLFYEPSTRTQCSFTAAMQRLGGSVVTVDNVSSSVAKGESIADTIQTLESYCDAVCMRHPAVGSVESAIQVAKKPIINAGDGVGEHPTQALLDVFTIREELGTVNGLTITVVGDLKHGRTVHSLVRLLANYQVKINYVSPSSLSMPTEIIKELNEKGIEQKEYTNIESILPTTNVLYVTRVQKERFQSIEEYEKVKDSFIITPHTLTKASDNMIVMHPLPRINEISPEVDSDPRAAYFRQMENGLYVRMSLLALVFGAGV.

N-acetylmethionine is present on Met-1. The tract at residues 40 to 390 (MVGYNESISD…NVCGEQQHKS (351 aa)) is GATase (Glutamine amidotransferase). Ser-51, Gly-245, and Gly-247 together coordinate L-glutamine. One can recognise a Glutamine amidotransferase type-1 domain in the interval 196 to 388 (KVIVLDCGIK…VDNVCGEQQH (193 aa)). The active-site Nucleophile; for GATase activity is Cys-275. 4 residues coordinate L-glutamine: Gln-279, Asn-317, Gly-319, and Phe-320. Residues His-361 and Glu-363 each act as for GATase activity in the active site. The linker stretch occupies residues 391 to 405 (PMNKSKIIDCPKGIN). The segment at 406–948 (KVLILGSGGL…TNDVNINEKS (543 aa)) is CPSase A. A CPSase (Carbamoyl-phosphate synthase) region spans residues 406-1461 (KVLILGSGGL…MKGPMPIENV (1056 aa)). Residues Arg-526, Arg-566, Gly-572, Gly-573, Lys-603, Glu-610, Gly-636, Ile-637, His-638, Gln-679, and Glu-693 each contribute to the ATP site. ATP-grasp domains are found at residues 530 to 722 (AEKL…KVAL) and 1069 to 1260 (SRLL…KIII). Mg(2+) contacts are provided by Gln-679, Glu-693, and Asn-695. Mn(2+) is bound by residues Gln-679, Glu-693, and Asn-695. The tract at residues 949-1461 (YITLGSGSYR…MKGPMPIENV (513 aa)) is CPSase B. Positions 1105, 1144, 1146, 1151, 1176, 1177, 1178, 1179, 1219, and 1231 each coordinate ATP. Residues Gln-1219, Glu-1231, and Asn-1233 each coordinate Mg(2+). Gln-1219, Glu-1231, and Asn-1233 together coordinate Mn(2+). Positions 1324–1470 (FKAPEKNVLL…VDWRTSNKII (147 aa)) constitute an MGS-like domain. The interval 1463-1797 (WRTSNKIIRL…VRGKVVKVVL (335 aa)) is DHOase (dihydroorotase). Zn(2+) is bound by residues His-1479 and His-1481. (S)-dihydroorotate-binding residues include Arg-1483 and Asn-1513. Residues Lys-1564, His-1599, Cys-1622, His-1623, and Glu-1646 each contribute to the Zn(2+) site. Lys-1564 carries the N6-carboxylysine modification. Arg-1670 is a binding site for (S)-dihydroorotate. Asp-1695 provides a ligand contact to Zn(2+). Asp-1695 serves as the catalytic For DHOase activity. The (S)-dihydroorotate site is built by His-1699 and Pro-1711. Residues 1798-1916 (RGQIAFIDGK…DTLQTAFNIS (119 aa)) form a linker region. Residues 1917–2225 (DNSLAGKHIF…LLALVFGAGV (309 aa)) form an ATCase (Aspartate transcarbamylase) region. Positions 1974 and 1975 each coordinate carbamoyl phosphate. L-aspartate is bound at residue Lys-2002. Positions 2023, 2051, and 2054 each coordinate carbamoyl phosphate. L-aspartate is bound by residues Arg-2084 and Arg-2145. Positions 2184 and 2185 each coordinate carbamoyl phosphate.

It in the N-terminal section; belongs to the CarA family. This sequence in the 2nd section; belongs to the CarB family. In the 3rd section; belongs to the metallo-dependent hydrolases superfamily. DHOase family. CAD subfamily. The protein in the C-terminal section; belongs to the aspartate/ornithine carbamoyltransferase superfamily. ATCase family. In terms of assembly, homohexamer. Requires Mg(2+) as cofactor. Mn(2+) serves as cofactor. It depends on Zn(2+) as a cofactor.

Its subcellular location is the cytoplasm. The enzyme catalyses hydrogencarbonate + L-glutamine + 2 ATP + H2O = carbamoyl phosphate + L-glutamate + 2 ADP + phosphate + 2 H(+). It catalyses the reaction L-glutamine + H2O = L-glutamate + NH4(+). It carries out the reaction hydrogencarbonate + NH4(+) + 2 ATP = carbamoyl phosphate + 2 ADP + phosphate + 2 H(+). The catalysed reaction is carbamoyl phosphate + L-aspartate = N-carbamoyl-L-aspartate + phosphate + H(+). The enzyme catalyses (S)-dihydroorotate + H2O = N-carbamoyl-L-aspartate + H(+). It functions in the pathway pyrimidine metabolism; UMP biosynthesis via de novo pathway; (S)-dihydroorotate from bicarbonate: step 1/3. Its pathway is pyrimidine metabolism; UMP biosynthesis via de novo pathway; (S)-dihydroorotate from bicarbonate: step 2/3. It participates in pyrimidine metabolism; UMP biosynthesis via de novo pathway; (S)-dihydroorotate from bicarbonate: step 3/3. With respect to regulation, allosterically regulated and controlled by phosphorylation. 5-phosphoribose 1-diphosphate is an activator while UMP is an inhibitor of the CPSase reaction. Multifunctional protein that encodes the first 3 enzymatic activities of the de novo pyrimidine pathway: carbamoylphosphate synthetase (CPSase; EC 6.3.5.5), aspartate transcarbamylase (ATCase; EC 2.1.3.2) and dihydroorotase (DHOase; EC 3.5.2.3). The CPSase-function is accomplished in 2 steps, by a glutamine-dependent amidotransferase activity (GATase) that binds and cleaves glutamine to produce ammonia, followed by an ammonium-dependent carbamoyl phosphate synthetase, which reacts with the ammonia, hydrogencarbonate and ATP to form carbamoyl phosphate. The endogenously produced carbamoyl phosphate is sequestered and channeled to the ATCase active site. ATCase then catalyzes the formation of carbamoyl-L-aspartate from L-aspartate and carbamoyl phosphate. In the last step, DHOase catalyzes the cyclization of carbamoyl aspartate to dihydroorotate. In Dictyostelium discoideum (Social amoeba), this protein is Multifunctional protein pyr1-3 (pyr1-3).